The chain runs to 436 residues: MENIKLACSLETNQTYIIAVSGGVDSMALLHYLVAQKIKLQVVHFNHLTNSNTWKNKELVKNYCLQNSLGFHYFELNCPQKNFQAQARLLRQQKLMQIAAKHRTPFILTAHHLDDLAETILQKISRSSTLLGYSGMQIQTSWTDFIFLKPFLYIPKAKIISYAAFYKIPFLEDYTNQKLTYQRNQIRHQVIPYLKTQTSFLQNIQKYQQTLLQAYNFIRKQTLLFLTKHTNHSCNQPNSIALAPFLNLDLVIQKDIILLLLEQKNITQSFIFIQNIIKGINNPYKPNLSWHLNSDWHLIKDYKHIKLMNPALPLPFALTKPLLCVSTCNLCLVCVCPLIETLNYNSQKVSFPLKVRLRQPKDTLKFSFGTKKLKKFLIEKKVPLTQRNNLWLVVDNLDNILFIPQLYTNLTLGNQFRIYLAFKNFFTSSNCFSQTN.

Residue 21–26 coordinates ATP; that stretch reads SGGVDS.

The protein belongs to the tRNA(Ile)-lysidine synthase family.

The protein resides in the cytoplasm. It catalyses the reaction cytidine(34) in tRNA(Ile2) + L-lysine + ATP = lysidine(34) in tRNA(Ile2) + AMP + diphosphate + H(+). In terms of biological role, ligates lysine onto the cytidine present at position 34 of the AUA codon-specific tRNA(Ile) that contains the anticodon CAU, in an ATP-dependent manner. Cytidine is converted to lysidine, thus changing the amino acid specificity of the tRNA from methionine to isoleucine. The chain is tRNA(Ile)-lysidine synthase from Aster yellows witches'-broom phytoplasma (strain AYWB).